Consider the following 267-residue polypeptide: 4-hydroxy-tetrahydrodipicolinate reductase (267 aa).

Residues 8-13 (GAAGRM) and Asp-34 contribute to the NAD(+) site. NADP(+) is bound at residue Arg-35. Residues 98-100 (GTT) and 122-125 (AANF) contribute to the NAD(+) site. His-155 acts as the Proton donor/acceptor in catalysis. His-156 provides a ligand contact to (S)-2,3,4,5-tetrahydrodipicolinate. The Proton donor role is filled by Lys-159. 165–166 (GT) provides a ligand contact to (S)-2,3,4,5-tetrahydrodipicolinate.

This sequence belongs to the DapB family.

The protein localises to the cytoplasm. The catalysed reaction is (S)-2,3,4,5-tetrahydrodipicolinate + NAD(+) + H2O = (2S,4S)-4-hydroxy-2,3,4,5-tetrahydrodipicolinate + NADH + H(+). It catalyses the reaction (S)-2,3,4,5-tetrahydrodipicolinate + NADP(+) + H2O = (2S,4S)-4-hydroxy-2,3,4,5-tetrahydrodipicolinate + NADPH + H(+). It functions in the pathway amino-acid biosynthesis; L-lysine biosynthesis via DAP pathway; (S)-tetrahydrodipicolinate from L-aspartate: step 4/4. Functionally, catalyzes the conversion of 4-hydroxy-tetrahydrodipicolinate (HTPA) to tetrahydrodipicolinate. In Pseudomonas putida (strain W619), this protein is 4-hydroxy-tetrahydrodipicolinate reductase.